The primary structure comprises 1400 residues: DNA-directed RNA polymerase subunit beta' (1400 aa).

Zn(2+) contacts are provided by Cys-70, Cys-72, Cys-85, and Cys-88. Mg(2+) contacts are provided by Asp-460, Asp-462, and Asp-464. Cys-814, Cys-889, Cys-896, and Cys-899 together coordinate Zn(2+).

It belongs to the RNA polymerase beta' chain family. The RNAP catalytic core consists of 2 alpha, 1 beta, 1 beta' and 1 omega subunit. When a sigma factor is associated with the core the holoenzyme is formed, which can initiate transcription. Requires Mg(2+) as cofactor. It depends on Zn(2+) as a cofactor.

The catalysed reaction is RNA(n) + a ribonucleoside 5'-triphosphate = RNA(n+1) + diphosphate. Functionally, DNA-dependent RNA polymerase catalyzes the transcription of DNA into RNA using the four ribonucleoside triphosphates as substrates. This chain is DNA-directed RNA polymerase subunit beta', found in Alcanivorax borkumensis (strain ATCC 700651 / DSM 11573 / NCIMB 13689 / SK2).